Reading from the N-terminus, the 126-residue chain is Large ribosomal subunit protein bL20 (126 aa).

Belongs to the bacterial ribosomal protein bL20 family.

In terms of biological role, binds directly to 23S ribosomal RNA and is necessary for the in vitro assembly process of the 50S ribosomal subunit. It is not involved in the protein synthesizing functions of that subunit. The polypeptide is Large ribosomal subunit protein bL20 (Buchnera aphidicola subsp. Baizongia pistaciae (strain Bp)).